A 627-amino-acid chain; its full sequence is 1-deoxy-D-xylulose-5-phosphate synthase (627 aa).

Residues H80 and 121–123 (GHS) each bind thiamine diphosphate. D152 is a Mg(2+) binding site. Thiamine diphosphate is bound by residues 153–154 (GA), N181, Y288, and E370. N181 lines the Mg(2+) pocket.

It belongs to the transketolase family. DXPS subfamily. Homodimer. Mg(2+) serves as cofactor. It depends on thiamine diphosphate as a cofactor.

It carries out the reaction D-glyceraldehyde 3-phosphate + pyruvate + H(+) = 1-deoxy-D-xylulose 5-phosphate + CO2. The protein operates within metabolic intermediate biosynthesis; 1-deoxy-D-xylulose 5-phosphate biosynthesis; 1-deoxy-D-xylulose 5-phosphate from D-glyceraldehyde 3-phosphate and pyruvate: step 1/1. Functionally, catalyzes the acyloin condensation reaction between C atoms 2 and 3 of pyruvate and glyceraldehyde 3-phosphate to yield 1-deoxy-D-xylulose-5-phosphate (DXP). In Vibrio atlanticus (strain LGP32) (Vibrio splendidus (strain Mel32)), this protein is 1-deoxy-D-xylulose-5-phosphate synthase.